A 726-amino-acid chain; its full sequence is Germacradienol/geosmin synthase (726 aa).

The segment at 2–354 (TQQPFQLPHF…TSAADVGALL (353 aa)) is germacradienol/germacrene D synthase. Mg(2+) contacts are provided by D86, E91, N267, T271, Q276, D455, N598, S602, and E606. The DDXXD motif 1; degenerate signature appears at 86–91 (DDHFLE). Positions 355–726 (ADAVAQRARS…VPRSSPALTH (372 aa)) are geosmin synthase. Residues 455–459 (DDYYP) carry the DDXXD motif 2; degenerate motif.

The protein belongs to the terpene synthase family. Requires Mg(2+) as cofactor.

It carries out the reaction (2E,6E)-farnesyl diphosphate + H2O = (1E,4S,5E,7R)-germacra-1(10),5-dien-11-ol + diphosphate. The enzyme catalyses (1E,4S,5E,7R)-germacra-1(10),5-dien-11-ol + H2O = (-)-geosmin + acetone. The catalysed reaction is (2E,6E)-farnesyl diphosphate = (-)-germacrene D + diphosphate. The protein operates within secondary metabolite biosynthesis; geosmin biosynthesis. Its pathway is sesquiterpene biosynthesis; germacradienol biosynthesis; germacradienol from farnesyl diphosphate: step 1/1. It participates in sesquiterpene biosynthesis; germacrene D biosynthesis; germacrene D from farnesyl diphosphate: step 1/1. In terms of biological role, tow-domain protein where the N-terminal domain catalyzes the cyclization of farnesyl diphosphate (FPP) to a 85:15 mixture of the sesquiterpene alcohol germacradienol and the sesquiterpene hydrocarbon germacrene D. The C-terminal domain partially converts the germacradienol formed into geosmin, the characteristic odoriferous ('earthy aroma') constituent of Streptomyces species. The chain is Germacradienol/geosmin synthase (cyc2) from Streptomyces coelicolor (strain ATCC BAA-471 / A3(2) / M145).